We begin with the raw amino-acid sequence, 199 residues long: MINITIIDTGCANLSSVKFAFDRLGYNTEITFDLNKIKSADKLILPGVGTANAAMYNLQERQLIETIQNLTQPVLGICLGMQLMTEFSEEGNVPTLNLISGKTNRIPDTGLPLPQMGWNRVQFVKNCPLFDGIVQNSHFYFVHSYAVSPNEHSVAISNYGVNFSAAIAKENFYGVQFHPERSGKNGALLLKNFVEKVPF.

Positions 3–199 (NITIIDTGCA…LKNFVEKVPF (197 aa)) constitute a Glutamine amidotransferase type-1 domain. Cys-78 acts as the Nucleophile in catalysis. Residues His-178 and Glu-180 contribute to the active site.

In terms of assembly, heterodimer of HisH and HisF.

The protein localises to the cytoplasm. The catalysed reaction is 5-[(5-phospho-1-deoxy-D-ribulos-1-ylimino)methylamino]-1-(5-phospho-beta-D-ribosyl)imidazole-4-carboxamide + L-glutamine = D-erythro-1-(imidazol-4-yl)glycerol 3-phosphate + 5-amino-1-(5-phospho-beta-D-ribosyl)imidazole-4-carboxamide + L-glutamate + H(+). The enzyme catalyses L-glutamine + H2O = L-glutamate + NH4(+). Its pathway is amino-acid biosynthesis; L-histidine biosynthesis; L-histidine from 5-phospho-alpha-D-ribose 1-diphosphate: step 5/9. Its function is as follows. IGPS catalyzes the conversion of PRFAR and glutamine to IGP, AICAR and glutamate. The HisH subunit catalyzes the hydrolysis of glutamine to glutamate and ammonia as part of the synthesis of IGP and AICAR. The resulting ammonia molecule is channeled to the active site of HisF. This chain is Imidazole glycerol phosphate synthase subunit HisH (hisH), found in Haemophilus influenzae (strain ATCC 51907 / DSM 11121 / KW20 / Rd).